Consider the following 476-residue polypeptide: Probable cytosolic Fe-S cluster assembly factor GI11683 (476 aa).

[4Fe-4S] cluster-binding residues include Cys23, Cys68, Cys71, Cys74, Cys187, Cys243, Cys395, and Cys399.

This sequence belongs to the NARF family.

In terms of biological role, component of the cytosolic iron-sulfur (Fe/S) protein assembly machinery. Required for maturation of extramitochondrial Fe/S proteins. The polypeptide is Probable cytosolic Fe-S cluster assembly factor GI11683 (Drosophila mojavensis (Fruit fly)).